The following is a 727-amino-acid chain: Calpain-like protease 1 (727 aa).

The Calpain catalytic domain occupies 70–317; it reads SRFYPPIPIS…FKQLYLNWNQ (248 aa). Residues C128, H271, and N296 contribute to the active site.

The protein belongs to the peptidase C2 family. PalB/RIM13 subfamily. Interacts with SNF7, which may act together with RIM20 as a scaffold to recruit RIM13 to its substrate RIM101.

Its function is as follows. Required for the proteolytic cleavage of the transcriptional repressor RIM101 in response to alkaline ambient pH, which is necessary for sporulation and invasive growth. Probably the protease that cleaves RIM101. This Saccharomyces cerevisiae (strain ATCC 204508 / S288c) (Baker's yeast) protein is Calpain-like protease 1 (RIM13).